Here is an 86-residue protein sequence, read N- to C-terminus: Collagen alpha-1(XII) chain (86 aa).

Positions 1–12 (NQPGPPGPPGPP) are enriched in pro residues. Residues 1-86 (NQPGPPGPPG…PGRPGDSGIR (86 aa)) form a disordered region. A hydroxyproline mark is found at Pro6, Pro9, Pro12, Pro18, Pro24, Pro27, Pro30, Pro42, Pro51, Pro54, Pro65, Pro74, Pro77, and Pro80. Gly residues predominate over residues 16–25 (GEPGPGGRPG). Residues 35 to 50 (PQGERGLPGEXGERGL) are compositionally biased toward low complexity. The span at 57-71 (QGESRTGPPGSTGSR) shows a compositional bias: low complexity.

It belongs to the fibril-associated collagens with interrupted helices (FACIT) family. In terms of assembly, trimer of identical chains each containing 190 kDa of non-triple-helical sequences. Post-translationally, the triple-helical tail is stabilized by disulfide bonds at each end. Prolines at the third position of the tripeptide repeating unit (G-X-Y) are hydroxylated in some or all of the chains.

It localises to the secreted. The protein localises to the extracellular space. Its subcellular location is the extracellular matrix. Type XII collagen interacts with type I collagen-containing fibrils, the COL1 domain could be associated with the surface of the fibrils, and the COL2 and NC3 domains may be localized in the perifibrillar matrix. The polypeptide is Collagen alpha-1(XII) chain (COL12A1) (Bos taurus (Bovine)).